A 367-amino-acid polypeptide reads, in one-letter code: Phosphoribosylaminoimidazole-succinocarboxamide synthase (367 aa).

It belongs to the SAICAR synthetase family.

It carries out the reaction 5-amino-1-(5-phospho-D-ribosyl)imidazole-4-carboxylate + L-aspartate + ATP = (2S)-2-[5-amino-1-(5-phospho-beta-D-ribosyl)imidazole-4-carboxamido]succinate + ADP + phosphate + 2 H(+). Its pathway is purine metabolism; IMP biosynthesis via de novo pathway; 5-amino-1-(5-phospho-D-ribosyl)imidazole-4-carboxamide from 5-amino-1-(5-phospho-D-ribosyl)imidazole-4-carboxylate: step 1/2. This is Phosphoribosylaminoimidazole-succinocarboxamide synthase from Shewanella putrefaciens (strain CN-32 / ATCC BAA-453).